The chain runs to 394 residues: Keratin, type I cuticular Ha4 (394 aa).

The segment at 1-56 (MSYSCCLPSLGCRTSCSSRPCVPPSCHGYTLPGACNIPANVSNCNWFCEGSFNGSE) is head. In terms of domain architecture, IF rod spans 56 to 367 (EKETMQFLND…SLLESEDCKL (312 aa)). A coil 1A region spans residues 57–91 (KETMQFLNDRLASYLEKVRQLERDNAELEKLIQER). The interval 92 to 102 (SQQQEPLLCPS) is linker 1. Residues 103 to 203 (YQSYFKTIEE…HEEEVNTLRS (101 aa)) are coil 1B. The linker 12 stretch occupies residues 204-219 (QLGDRLNVEVDTAPTV). Residues 220 to 363 (DLNQVLNETR…NTYRSLLESE (144 aa)) form a coil 2 region. The interval 364-394 (DCKLPCNPCATTNASGNSCGPCGTSQKGCCN) is tail.

This sequence belongs to the intermediate filament family. Expressed in the hair follicles.

The protein is Keratin, type I cuticular Ha4 (KRT34) of Homo sapiens (Human).